A 235-amino-acid chain; its full sequence is Sugar fermentation stimulation protein homolog (235 aa).

This sequence belongs to the SfsA family.

The polypeptide is Sugar fermentation stimulation protein homolog (Pseudomonas aeruginosa (strain ATCC 15692 / DSM 22644 / CIP 104116 / JCM 14847 / LMG 12228 / 1C / PRS 101 / PAO1)).